Here is a 343-residue protein sequence, read N- to C-terminus: Methionine import ATP-binding protein MetN (343 aa).

An ABC transporter domain is found at 2–241 (IKLSNITKVF…PKTPLAQKFI (240 aa)). 38–45 (GASGAGKS) lines the ATP pocket.

It belongs to the ABC transporter superfamily. Methionine importer (TC 3.A.1.24) family. The complex is composed of two ATP-binding proteins (MetN), two transmembrane proteins (MetI) and a solute-binding protein (MetQ).

Its subcellular location is the cell inner membrane. The catalysed reaction is L-methionine(out) + ATP + H2O = L-methionine(in) + ADP + phosphate + H(+). It catalyses the reaction D-methionine(out) + ATP + H2O = D-methionine(in) + ADP + phosphate + H(+). In terms of biological role, part of the ABC transporter complex MetNIQ involved in methionine import. Responsible for energy coupling to the transport system. In Shigella boydii serotype 4 (strain Sb227), this protein is Methionine import ATP-binding protein MetN.